We begin with the raw amino-acid sequence, 466 residues long: Soluble pyridine nucleotide transhydrogenase (466 aa).

36–45 (ERYQNVGGGC) contributes to the FAD binding site.

Belongs to the class-I pyridine nucleotide-disulfide oxidoreductase family. FAD is required as a cofactor.

It is found in the cytoplasm. The catalysed reaction is NAD(+) + NADPH = NADH + NADP(+). Functionally, conversion of NADPH, generated by peripheral catabolic pathways, to NADH, which can enter the respiratory chain for energy generation. The polypeptide is Soluble pyridine nucleotide transhydrogenase (Escherichia coli O127:H6 (strain E2348/69 / EPEC)).